A 221-amino-acid polypeptide reads, in one-letter code: ATP phosphoribosyltransferase (221 aa).

It belongs to the ATP phosphoribosyltransferase family. Short subfamily. As to quaternary structure, heteromultimer composed of HisG and HisZ subunits.

The protein localises to the cytoplasm. It carries out the reaction 1-(5-phospho-beta-D-ribosyl)-ATP + diphosphate = 5-phospho-alpha-D-ribose 1-diphosphate + ATP. Its pathway is amino-acid biosynthesis; L-histidine biosynthesis; L-histidine from 5-phospho-alpha-D-ribose 1-diphosphate: step 1/9. Catalyzes the condensation of ATP and 5-phosphoribose 1-diphosphate to form N'-(5'-phosphoribosyl)-ATP (PR-ATP). Has a crucial role in the pathway because the rate of histidine biosynthesis seems to be controlled primarily by regulation of HisG enzymatic activity. The chain is ATP phosphoribosyltransferase from Anaeromyxobacter dehalogenans (strain 2CP-1 / ATCC BAA-258).